We begin with the raw amino-acid sequence, 176 residues long: MTFNRRNDRNVERETSEFEEKMLFVNRTSKTYQGGRRFRFAALVILGDRNGRVGMGIGKAKEVPVAIEKAKSIARKNMISVPVENGTIPHEIVGVNSTSRVLLKPAGPGTGVIAGTVPRSIAELAGITNMLSKELGSRNKVNVAYAVFDGFKNLRTAKQVRALRGIEAAPVTGGAQ.

An S5 DRBM domain is found at 18 to 81; it reads FEEKMLFVNR…SIARKNMISV (64 aa).

Belongs to the universal ribosomal protein uS5 family. As to quaternary structure, part of the 30S ribosomal subunit. Contacts proteins S4 and S8.

Functionally, with S4 and S12 plays an important role in translational accuracy. Located at the back of the 30S subunit body where it stabilizes the conformation of the head with respect to the body. This is Small ribosomal subunit protein uS5 from Deinococcus deserti (strain DSM 17065 / CIP 109153 / LMG 22923 / VCD115).